We begin with the raw amino-acid sequence, 74 residues long: UPF0248 protein MK0350 (74 aa).

Belongs to the UPF0248 family.

The protein is UPF0248 protein MK0350 of Methanopyrus kandleri (strain AV19 / DSM 6324 / JCM 9639 / NBRC 100938).